The chain runs to 387 residues: Succinate--CoA ligase [ADP-forming] subunit beta (387 aa).

Positions 9-236 constitute an ATP-grasp domain; it reads KELFAKHNVP…RDATDPLELK (228 aa). Residues lysine 45, 52-54, serine 94, and glutamate 99 each bind ATP; that span reads GRG. Mg(2+) contacts are provided by asparagine 191 and aspartate 205. Substrate is bound by residues asparagine 256 and 318–320; that span reads GIT.

Belongs to the succinate/malate CoA ligase beta subunit family. As to quaternary structure, heterotetramer of two alpha and two beta subunits. The cofactor is Mg(2+).

The catalysed reaction is succinate + ATP + CoA = succinyl-CoA + ADP + phosphate. It catalyses the reaction GTP + succinate + CoA = succinyl-CoA + GDP + phosphate. The protein operates within carbohydrate metabolism; tricarboxylic acid cycle; succinate from succinyl-CoA (ligase route): step 1/1. Its function is as follows. Succinyl-CoA synthetase functions in the citric acid cycle (TCA), coupling the hydrolysis of succinyl-CoA to the synthesis of either ATP or GTP and thus represents the only step of substrate-level phosphorylation in the TCA. The beta subunit provides nucleotide specificity of the enzyme and binds the substrate succinate, while the binding sites for coenzyme A and phosphate are found in the alpha subunit. This chain is Succinate--CoA ligase [ADP-forming] subunit beta, found in Mycolicibacterium smegmatis (strain ATCC 700084 / mc(2)155) (Mycobacterium smegmatis).